A 742-amino-acid chain; its full sequence is Dynein axonemal intermediate chain 4 (742 aa).

4 WD repeats span residues 462–502 (HCEC…DFPV), 511–559 (KHTS…DCND), 631–671 (GHKG…PILT), and 674–713 (NTTNAVYDIMWSPSSALMFGAVSENRVEIWDLGVSIIDPV).

Part of the multisubunit axonemal dynein complex formed at least of two heavy chains and a number of intermediate and light chains. Associated with axonemal dynein subunits such as, DNAH2, DNAI3, and DYNLT1.

It localises to the cytoplasm. It is found in the cytoskeleton. Its subcellular location is the flagellum axoneme. The protein resides in the cilium axoneme. The protein localises to the dynein axonemal particle. Plays a critical role in the assembly of axonemal dynein complex, thereby playing a role in ciliary motility. In Xenopus laevis (African clawed frog), this protein is Dynein axonemal intermediate chain 4.